Here is a 78-residue protein sequence, read N- to C-terminus: uncharacterized protein (78 aa).

This is an uncharacterized protein from Escherichia coli O6:H1 (strain CFT073 / ATCC 700928 / UPEC).